Here is a 455-residue protein sequence, read N- to C-terminus: T-box protein VegT (455 aa).

Residues 57-230 (LWAQFHQEGT…HNPFAKGFRE (174 aa)) constitute a DNA-binding region (T-box). The span at 229 to 241 (REQERSHKRDDVL) shows a compositional bias: basic and acidic residues. Disordered regions lie at residues 229–276 (REQE…RVKE) and 295–360 (ANQG…PDSD). Positions 308 to 326 (GANQEQQVPSSSSNFYNRN) are enriched in polar residues.

Forms a repression complex on the promoters of the nodal/nr1 and siamois genes with the maternal factors tcf7l1/tcf3 and pouf5.1/oct-25. Interacts (via C-terminus) with tcf7l1/tcf3 (via N-terminus). Also interacts with the other POU-domain transcription factors pou5f1.2/oct-91 and pou5f1.3/oct-60. As to expression, vegetally localized in oocytes and expressed in the presumptive endoderm and mesoderm at early gastrula stage. Expression is down-regulated in the endoderm by the end of gastrulation but maintained in the lateral and ventral mesoderm of the blastopore lip.

The protein localises to the nucleus. Functionally, transcription factor required for both mesoderm and endoderm formation in the embryo; signaling determinants and concentration levels may determine which germ layer is formed. Acts together with beta-catenin to activate genes that are responsible for mesoderm induction including wnt-8, eomes t/bra, siamois, mix1 and sox17. Directly binds to promoter DNA. Patterns the mesoderm along the dorsoventral and posterior axis. Activates siamois gene transcription when alone or in combination with beta-catenin, but inhibits siamois transcription in combination with pou5f1.1/oct-25. This chain is T-box protein VegT, found in Xenopus tropicalis (Western clawed frog).